A 479-amino-acid polypeptide reads, in one-letter code: uncharacterized protein (479 aa).

A run of 8 helical transmembrane segments spans residues 25-45 (VVFV…LFFF), 63-83 (IAMI…LAGG), 110-130 (LFGP…TVIF), 133-153 (GVFN…AGIL), 175-195 (VLSI…VLGI), 229-249 (ILLY…IVWL), 287-307 (LILN…IAFI), and 328-348 (LFAP…LLLL).

The protein in the C-terminal section; belongs to the GatC family.

It is found in the cell membrane. This is an uncharacterized protein from Mycoplasma pneumoniae (strain ATCC 29342 / M129 / Subtype 1) (Mycoplasmoides pneumoniae).